Reading from the N-terminus, the 138-residue chain is 18 kDa antigen 2 (138 aa).

In terms of domain architecture, sHSP spans 21–131 (GTRRPAVMPM…KPRRIEINHN (111 aa)).

Belongs to the small heat shock protein (HSP20) family.

In terms of biological role, not known. This protein is one of the major immune reactive proteins in mycobacteria. This chain is 18 kDa antigen 2, found in Mycobacterium avium.